Here is a 130-residue protein sequence, read N- to C-terminus: Small ribosomal subunit protein uS9 (130 aa).

Belongs to the universal ribosomal protein uS9 family.

This is Small ribosomal subunit protein uS9 from Marinobacter nauticus (strain ATCC 700491 / DSM 11845 / VT8) (Marinobacter aquaeolei).